The primary structure comprises 220 residues: Ribose-5-phosphate isomerase A (220 aa).

Substrate-binding positions include 25-28, 80-83, and 93-96; these read TGST, DGAD, and KGGG. Glu102 (proton acceptor) is an active-site residue. Lys120 serves as a coordination point for substrate.

This sequence belongs to the ribose 5-phosphate isomerase family. As to quaternary structure, homodimer.

It catalyses the reaction aldehydo-D-ribose 5-phosphate = D-ribulose 5-phosphate. It functions in the pathway carbohydrate degradation; pentose phosphate pathway; D-ribose 5-phosphate from D-ribulose 5-phosphate (non-oxidative stage): step 1/1. Its function is as follows. Catalyzes the reversible conversion of ribose-5-phosphate to ribulose 5-phosphate. The sequence is that of Ribose-5-phosphate isomerase A from Bacillus thuringiensis subsp. konkukian (strain 97-27).